Reading from the N-terminus, the 131-residue chain is Fumarate reductase subunit C (131 aa).

3 consecutive transmembrane segments (helical) span residues 30-50 (EGTA…LFAL), 63-83 (FLQN…ALLH), and 109-129 (IIKS…FVAL).

Belongs to the FrdC family. As to quaternary structure, part of an enzyme complex containing four subunits: a flavoprotein (FrdA), an iron-sulfur protein (FrdB), and two hydrophobic anchor proteins (FrdC and FrdD).

It is found in the cell inner membrane. Its function is as follows. Two distinct, membrane-bound, FAD-containing enzymes are responsible for the catalysis of fumarate and succinate interconversion; fumarate reductase is used in anaerobic growth, and succinate dehydrogenase is used in aerobic growth. Anchors the catalytic components of the fumarate reductase complex to the cell inner membrane, binds quinones. In Shigella boydii serotype 18 (strain CDC 3083-94 / BS512), this protein is Fumarate reductase subunit C.